The chain runs to 517 residues: MLRPRRSLGVSSPAKQRKKAAPKNSMATRANRKRLPSYLKPGSAVEISSDEIGFRGSWYMGKVITIPSSSDKDSVKCQVEYTTLFFDKEGTKPLKEVVDMSQLRPPAPPMSEIEKKKKIVVGEEVDAFYNDGWWEGDVTEVLDDGKFSVFFRSSKEQIRFRKDELRFHREWVDGAWKPPLEETEEEEDESEEDKLDDSEDEEDILARVDLETTRAIAKQMFSSGTVVEVSSDEEGFQGCWFAAKVVEPVGEDKFLVEYRDLREKDGIEPLKEETDFLHIRPPPPRDEDIDFAVGDKINAFYNDGWWVGVVIDGMKHGTVGIYFRQSQEKMRFGRQGLRLHKDWVDGTWQLPLKGGKIKREKTVSCNRNVRPKKATEKQAFSIGTPIEVSPEEEGFEDSWFLAKLIEYRGKDKCLVEYDNLKAEDGKEPLREEVNVSRIRPLPLESVMVSPFERHDKVNALYNDGWWVGVIRKVLAKSSYLVLFKNTQELLKFHHSQLRLHQEWIDGKWITSFKSQKV.

Positions 1–35 (MLRPRRSLGVSSPAKQRKKAAPKNSMATRANRKRL) are disordered. 2 plant Agenet, chromatin-binding regions span residues 37-111 (SYLK…PPMS) and 117-173 (KKIV…EWVD). The segment at 177–202 (KPPLEETEEEEDESEEDKLDDSEDEE) is disordered. A compositionally biased stretch (acidic residues) spans 181–202 (EETEEEEDESEEDKLDDSEDEE). Plant Agenet, chromatin-binding regions lie at residues 219-287 (QMFS…PRDE), 289-345 (IDFA…DWVD), 378-446 (QAFS…LESV), and 449-505 (SPFE…EWID).

As to expression, expressed ubiquitously during vegetative stage, in meristems (e.g. root tips and shoot apical meristem), and in ovules and young seeds during reproductive stage.

Its subcellular location is the nucleus. Its function is as follows. Heterochromatin-binding protein that preferentially occupies long transposons and specifically recognizes the histone H3 'Lys-9' methylation (H3K9me) marks, with a stronger affinity for dimethylated H3K9 (H3K9me2). Required for transcriptional silencing, non-CG DNA methylation (e.g. CHG and CHH regions), and H3K9 dimethylation (H3K9me2) at some loci. Mediates heterochromatin phase separation and chromocenter formation. The chain is Protein AGENET DOMAIN (AGD)-CONTAINING P1 from Arabidopsis thaliana (Mouse-ear cress).